The sequence spans 246 residues: uncharacterized protein (246 aa).

6 helical membrane-spanning segments follow: residues 7 to 27 (KVTLVSLILMAVFQFFMALII), 50 to 70 (LNILLQALTIVIAATIVSMEF), 99 to 119 (VSFYLYLAYYILALLFGLLFF), 135 to 155 (LALIGSNWLEAVMMGLFGLLC), 163 to 183 (AVAVVVSFVVLYGASTLVQLM), and 219 to 239 (FSIGILIIHAIFFIVVGWWCF).

The protein resides in the cell membrane. This is an uncharacterized protein from Bacillus subtilis (strain 168).